Reading from the N-terminus, the 137-residue chain is Large ribosomal subunit protein uL16 (137 aa).

This sequence belongs to the universal ribosomal protein uL16 family. Part of the 50S ribosomal subunit.

Functionally, binds 23S rRNA and is also seen to make contacts with the A and possibly P site tRNAs. This Methylorubrum extorquens (strain CM4 / NCIMB 13688) (Methylobacterium extorquens) protein is Large ribosomal subunit protein uL16.